A 246-amino-acid polypeptide reads, in one-letter code: Homeobox protein SIX6 (246 aa).

The segment at residues 128 to 187 (GEQKTHCFKERTRHLLREWYLQDPYPNPSKKRELAQATGLTPTQVGNWFKNRRQRDRAAA) is a DNA-binding region (homeobox). The segment at 190 to 246 (NRLQQQVLSQGSGRALRAEGDGTPEVLGVATSPAASLSSKAATSAISITSSDSECDI) is disordered. Polar residues predominate over residues 191–201 (RLQQQVLSQGS). Thr-212 carries the post-translational modification Phosphothreonine. Residues 219 to 246 (ATSPAASLSSKAATSAISITSSDSECDI) show a composition bias toward low complexity. Phosphoserine occurs at positions 221, 225, 227, and 228.

It belongs to the SIX/Sine oculis homeobox family. In terms of assembly, interacts with TLE4 and TLE5. As to expression, expressed in the developing and adult retina. Also expressed in the hypothalamic and the pituitary regions.

The protein localises to the nucleus. May be involved in eye development. This is Homeobox protein SIX6 (SIX6) from Homo sapiens (Human).